The primary structure comprises 39 residues: Photosystem II reaction center protein L (39 aa).

The helical transmembrane segment at 16–37 threads the bilayer; that stretch reads RTSLYLGLLLVAVLGILFSSYF.

This sequence belongs to the PsbL family. As to quaternary structure, PSII is composed of 1 copy each of membrane proteins PsbA, PsbB, PsbC, PsbD, PsbE, PsbF, PsbH, PsbI, PsbJ, PsbK, PsbL, PsbM, PsbT, PsbX, PsbY, PsbZ, Psb30/Ycf12, peripheral proteins PsbO, CyanoQ (PsbQ), PsbU, PsbV and a large number of cofactors. It forms dimeric complexes.

The protein resides in the cellular thylakoid membrane. One of the components of the core complex of photosystem II (PSII). PSII is a light-driven water:plastoquinone oxidoreductase that uses light energy to abstract electrons from H(2)O, generating O(2) and a proton gradient subsequently used for ATP formation. It consists of a core antenna complex that captures photons, and an electron transfer chain that converts photonic excitation into a charge separation. This subunit is found at the monomer-monomer interface and is required for correct PSII assembly and/or dimerization. Required for PSII activity, at least in part due to its effects on PSII assembly. May make specific contact(s) with lipids. This chain is Photosystem II reaction center protein L, found in Synechocystis sp. (strain ATCC 27184 / PCC 6803 / Kazusa).